Here is a 743-residue protein sequence, read N- to C-terminus: Phosphoribosylformylglycinamidine synthase subunit PurL (743 aa).

Histidine 50 is an active-site residue. ATP is bound by residues tyrosine 53 and lysine 92. Glutamate 94 contributes to the Mg(2+) binding site. Residues serine 95–histidine 98 and arginine 117 contribute to the substrate site. The Proton acceptor role is filled by histidine 96. Residue aspartate 118 participates in Mg(2+) binding. Residue glutamine 241 participates in substrate binding. A Mg(2+)-binding site is contributed by aspartate 269. Glutamate 313 to glutamine 315 lines the substrate pocket. ATP is bound by residues aspartate 494 and glycine 531. Asparagine 532 is a Mg(2+) binding site. Serine 534 serves as a coordination point for substrate.

The protein belongs to the FGAMS family. As to quaternary structure, monomer. Part of the FGAM synthase complex composed of 1 PurL, 1 PurQ and 2 PurS subunits.

The protein resides in the cytoplasm. It carries out the reaction N(2)-formyl-N(1)-(5-phospho-beta-D-ribosyl)glycinamide + L-glutamine + ATP + H2O = 2-formamido-N(1)-(5-O-phospho-beta-D-ribosyl)acetamidine + L-glutamate + ADP + phosphate + H(+). The protein operates within purine metabolism; IMP biosynthesis via de novo pathway; 5-amino-1-(5-phospho-D-ribosyl)imidazole from N(2)-formyl-N(1)-(5-phospho-D-ribosyl)glycinamide: step 1/2. Part of the phosphoribosylformylglycinamidine synthase complex involved in the purines biosynthetic pathway. Catalyzes the ATP-dependent conversion of formylglycinamide ribonucleotide (FGAR) and glutamine to yield formylglycinamidine ribonucleotide (FGAM) and glutamate. The FGAM synthase complex is composed of three subunits. PurQ produces an ammonia molecule by converting glutamine to glutamate. PurL transfers the ammonia molecule to FGAR to form FGAM in an ATP-dependent manner. PurS interacts with PurQ and PurL and is thought to assist in the transfer of the ammonia molecule from PurQ to PurL. In Sinorhizobium fredii (strain HH103), this protein is Phosphoribosylformylglycinamidine synthase subunit PurL.